The chain runs to 228 residues: 2-C-methyl-D-erythritol 4-phosphate cytidylyltransferase (228 aa).

Belongs to the IspD/TarI cytidylyltransferase family. IspD subfamily.

It carries out the reaction 2-C-methyl-D-erythritol 4-phosphate + CTP + H(+) = 4-CDP-2-C-methyl-D-erythritol + diphosphate. It functions in the pathway isoprenoid biosynthesis; isopentenyl diphosphate biosynthesis via DXP pathway; isopentenyl diphosphate from 1-deoxy-D-xylulose 5-phosphate: step 2/6. In terms of biological role, catalyzes the formation of 4-diphosphocytidyl-2-C-methyl-D-erythritol from CTP and 2-C-methyl-D-erythritol 4-phosphate (MEP). This Trichormus variabilis (strain ATCC 29413 / PCC 7937) (Anabaena variabilis) protein is 2-C-methyl-D-erythritol 4-phosphate cytidylyltransferase.